The sequence spans 368 residues: Quinolinate synthase (368 aa).

His-46 and Ser-63 together coordinate iminosuccinate. Cys-110 lines the [4Fe-4S] cluster pocket. Iminosuccinate contacts are provided by residues 141 to 143 and Ser-162; that span reads YVN. Cys-230 is a [4Fe-4S] cluster binding site. Iminosuccinate is bound by residues 256 to 258 and Thr-273; that span reads HPE. Residue Cys-320 participates in [4Fe-4S] cluster binding.

This sequence belongs to the quinolinate synthase family. Type 3 subfamily. Homotrimer. It depends on [4Fe-4S] cluster as a cofactor.

The protein resides in the cytoplasm. It carries out the reaction iminosuccinate + dihydroxyacetone phosphate = quinolinate + phosphate + 2 H2O + H(+). It participates in cofactor biosynthesis; NAD(+) biosynthesis; quinolinate from iminoaspartate: step 1/1. In terms of biological role, catalyzes the condensation of iminoaspartate with dihydroxyacetone phosphate to form quinolinate. The polypeptide is Quinolinate synthase (Bacillus subtilis (strain 168)).